A 373-amino-acid polypeptide reads, in one-letter code: Hydrogenase maturation factor HypD (373 aa).

3 residues coordinate Fe cation: cysteine 41, cysteine 69, and cysteine 72.

This sequence belongs to the HypD family. As to quaternary structure, monomer. Interacts with HypC. Forms a complex with HypC, or HybG, and HypE. It depends on [4Fe-4S] cluster as a cofactor.

It participates in protein modification; [NiFe] hydrogenase maturation. Its function is as follows. Involved in the maturation of [NiFe] hydrogenases. Involved in the biosynthesis of the Fe(CN)(2)CO cofactor. HypD may act as a scaffold on which the Fe(CN)(2)CO cofactor is formed. In complex with HypC, accepts the cyanide ligand generated by HypF and HypE, and also coordinates the carbon monoxide ligand. Required for the formation of all three hydrogenase isoenzymes. The sequence is that of Hydrogenase maturation factor HypD from Escherichia coli (strain K12).